Reading from the N-terminus, the 176-residue chain is MGFPKEGEKVQIHSYKHNGSIHRMWEETTILKGTQSLVIGANDRTVVTESDGRTWITREPAICYFHANYWFNVIGMLREEGVYYYCNLSSPFAYDSEALKYIDYDLDIKVYPDMTYTLLDEDEYEKHSQIMQYPPVIDTILKRNVAQLTQWIHQRKGPFAPDFVDMWYERYLMYRN.

The active-site Proton donor is Arg23. Mg(2+) contacts are provided by Asn87, Asp103, Asp105, Asp107, Asp120, and Glu123.

This sequence belongs to the Ntdp family. Mg(2+) serves as cofactor.

It catalyses the reaction a ribonucleoside 5'-triphosphate + H2O = a ribonucleoside 5'-diphosphate + phosphate + H(+). It carries out the reaction a ribonucleoside 5'-diphosphate + H2O = a ribonucleoside 5'-phosphate + phosphate + H(+). In terms of biological role, has nucleoside phosphatase activity towards nucleoside triphosphates and nucleoside diphosphates. The polypeptide is Nucleoside triphosphate/diphosphate phosphatase (Bacillus cereus (strain AH820)).